Consider the following 83-residue polypeptide: U1-theraphotoxin-Hs1f (83 aa).

The signal sequence occupies residues 1–21 (MKVTLIAILTCAAVLVLHTTA). Positions 22–48 (AEELEESQLMEVGMPDTELAAVDEERL) are excised as a propeptide. Cystine bridges form between C51/C64, C55/C75, and C69/C80.

It belongs to the neurotoxin 12 (Hwtx-2) family. 02 (Hwtx-2) subfamily. Expressed by the venom gland.

The protein resides in the secreted. Functionally, lethal neurotoxin that blocks neuromuscular transmission. The polypeptide is U1-theraphotoxin-Hs1f (Cyriopagopus schmidti (Chinese bird spider)).